The sequence spans 320 residues: Acetyl-coenzyme A carboxylase carboxyl transferase subunit alpha (320 aa).

Positions 42 to 295 (IGDKAAQALK…GDAIAEAFND (254 aa)) constitute a CoA carboxyltransferase C-terminal domain.

The protein belongs to the AccA family. Acetyl-CoA carboxylase is a heterohexamer composed of biotin carboxyl carrier protein (AccB), biotin carboxylase (AccC) and two subunits each of ACCase subunit alpha (AccA) and ACCase subunit beta (AccD).

Its subcellular location is the cytoplasm. It carries out the reaction N(6)-carboxybiotinyl-L-lysyl-[protein] + acetyl-CoA = N(6)-biotinyl-L-lysyl-[protein] + malonyl-CoA. It participates in lipid metabolism; malonyl-CoA biosynthesis; malonyl-CoA from acetyl-CoA: step 1/1. Its function is as follows. Component of the acetyl coenzyme A carboxylase (ACC) complex. First, biotin carboxylase catalyzes the carboxylation of biotin on its carrier protein (BCCP) and then the CO(2) group is transferred by the carboxyltransferase to acetyl-CoA to form malonyl-CoA. In Nitrobacter hamburgensis (strain DSM 10229 / NCIMB 13809 / X14), this protein is Acetyl-coenzyme A carboxylase carboxyl transferase subunit alpha.